Consider the following 416-residue polypeptide: MSTDAEDVSNDRRKYEFRKVIEELREYEGSGTQLVTIYIPPDRQVSDVVAHITQEHSEASNIKSKQTRTNVQDALTSIKDRLRYYDTYPPDNGIVLFSGAVSTGGGQTTMVTRSLESPPEPVQSFRYHCDSDFLTDPLEDMLADKGLFGLIVLDRREANVGWLKGKRVEPVKSASSLVPGKQRKGGQSAQRFARLRLEAIDNFYQEVAGMANDLFVPKRHEIDGVLVGGPSPTKDEFLDGDYLHHELGDVVVGKFDVSYTDESGLHDLVDSAQDVLADQEVMKDKAEMEEFFEKLHGGEEATYGFEPTRKNLMMGAVDRLLLSEDLRSDVVVYECPDGHEEYEVIDRRHDDPEHTCSDCGSASEKTEREDVIEYLMSIAEQRGTETKFISTDFEKGEQLHNAFGGIAGILRYATGI.

The protein belongs to the eukaryotic release factor 1 family. In terms of assembly, heterodimer of two subunits, one of which binds GTP.

The protein resides in the cytoplasm. Its function is as follows. Directs the termination of nascent peptide synthesis (translation) in response to the termination codons UAA, UAG and UGA. This Haloquadratum walsbyi (strain DSM 16790 / HBSQ001) protein is Peptide chain release factor subunit 1.